Consider the following 403-residue polypeptide: MFACDELLLNASTIDATGLQLSNQAIVIRKGRIEWCGSEDQLPAHFQESAKSRKDCHGQLITPGLIDCHTHLVYAGHRAAEFRLKLQGVSYADIAKSGGGILSTVQMTRDASEEELVDQSLPRLLALKNEGVTTVEIKSGYGLDLQNELKMLRVARQLGEVAGIRVKTTFLGAHAVGPEFKGNSQAYVDFLCNEMLPAAKNMDLVDAVDVFCESIAFSIRQAEQIFQAAKDLNLPIKCHAEQLSNMGASSLAARYGALSCDHLEFLDENGALNMVKANTVAVLLPGAFYFLKEKQKPPVDLLRQVGVGMAIATDSNPGSSPTTSLLLMMSMACQFFSMSIPEVLSAVTYQASRALGMEKDIGSIEAGKIADLVLWSIKDSAALCYYFAYPLPHQTMVAGEWVS.

The Fe(3+) site is built by His-69 and His-71. Residues His-69 and His-71 each coordinate Zn(2+). Residues Arg-78, Tyr-141, and His-174 each contribute to the 4-imidazolone-5-propanoate site. Residue Tyr-141 participates in N-formimidoyl-L-glutamate binding. Residue His-239 coordinates Fe(3+). Zn(2+) is bound at residue His-239. 4-imidazolone-5-propanoate is bound at residue Gln-242. Residue Asp-314 participates in Fe(3+) binding. Asp-314 lines the Zn(2+) pocket. Residues Asn-316 and Gly-318 each coordinate N-formimidoyl-L-glutamate. Ser-319 provides a ligand contact to 4-imidazolone-5-propanoate.

The protein belongs to the metallo-dependent hydrolases superfamily. HutI family. Zn(2+) is required as a cofactor. It depends on Fe(3+) as a cofactor.

It is found in the cytoplasm. It carries out the reaction 4-imidazolone-5-propanoate + H2O = N-formimidoyl-L-glutamate. Its pathway is amino-acid degradation; L-histidine degradation into L-glutamate; N-formimidoyl-L-glutamate from L-histidine: step 3/3. Its function is as follows. Catalyzes the hydrolytic cleavage of the carbon-nitrogen bond in imidazolone-5-propanoate to yield N-formimidoyl-L-glutamate. It is the third step in the universal histidine degradation pathway. This chain is Imidazolonepropionase, found in Legionella pneumophila (strain Paris).